The following is a 196-amino-acid chain: Small ribosomal subunit protein uS4c (196 aa).

Positions 22 to 42 (TRKTPKSGSNPKKKFHSGKKE) are disordered. In terms of domain architecture, S4 RNA-binding spans 89 to 169 (MRLDNILFRL…LPKHLTIDTL (81 aa)).

The protein belongs to the universal ribosomal protein uS4 family. Part of the 30S ribosomal subunit. Contacts protein S5. The interaction surface between S4 and S5 is involved in control of translational fidelity.

The protein localises to the plastid. The protein resides in the chloroplast. In terms of biological role, one of the primary rRNA binding proteins, it binds directly to 16S rRNA where it nucleates assembly of the body of the 30S subunit. Functionally, with S5 and S12 plays an important role in translational accuracy. In Melica altissima (Siberian melic grass), this protein is Small ribosomal subunit protein uS4c (rps4).